A 262-amino-acid chain; its full sequence is Endoplasmic reticulum chaperone BiP (262 aa).

8–11 (GSTR) lines the ATP pocket. The interval 53-63 (QDTGDLVLLDV) is interdomain linker. The substrate-binding (SBD) stretch occupies residues 64–144 (CPLTLGIETV…PRGVPQIEVT (81 aa)). N6-succinyllysine is present on Lys-91. Position 136 is an omega-N-methylarginine (Arg-136). Thr-162 is modified (O-AMP-threonine; alternate). A Phosphothreonine; alternate modification is found at Thr-162. An N6,N6,N6-trimethyllysine; by METTL21A; in vitro modification is found at Lys-229. Lys-229 carries the post-translational modification N6,N6-dimethyllysine; alternate. Lys-229 carries the post-translational modification N6-methyllysine; alternate. Residue Lys-235 is modified to N6-methyllysine.

This sequence belongs to the heat shock protein 70 family. Monomer and homooligomer; homooligomerization via the interdomain linker inactivates the chaperone activity and acts as a storage of HSPA5/BiP molecules. Interacts with DNAJC1 (via J domain). Component of an EIF2 complex at least composed of CELF1/CUGBP1, CALR, CALR3, EIF2S1, EIF2S2, HSP90B1 and HSPA5. Part of a large chaperone multiprotein complex comprising DNAJB11, HSP90B1, HSPA5, HYOU, PDIA2, PDIA4, PDIA6, PPIB, SDF2L1, UGGT1 and very small amounts of ERP29, but not, or at very low levels, CALR nor CANX. Interacts with TMEM132A and TRIM21. May form a complex with ERLEC1, OS9, SEL1L and SYVN1. Interacts with DNAJC10. Interacts with DNAJB9/ERdj4; leading to recruit HSPA5/BiP to ERN1/IRE1. Interacts with ERN1/IRE1 (via luminal domain); the interaction takes place following interaction with DNAJB9/ERdj4 and leads to inactivate ERN1/IRE1, the interaction also competitively inhibits ERN1 interaction with MANF. Interacts directly with MANF (via SAP domain); the interaction inhibits ATP binding to HSPA5/BiP and subsequent nucleotide exchange. Interacts with EIF2AK3/PERK (via luminal domain); interaction leads to inactivate EIF2AK3/PERK. Interacts with MX1. Interacts with METTL23. Interacts with CEMIP; the interaction induces calcium leakage from the endoplasmic reticulum and cell migration. Interacts with PCSK4 form; the interaction takes place in the endoplasmic reticulum. Interacts with CIPC. Interacts with CCDC88B (via C-terminus); the interaction opposes ERN1-mediated JNK activation, protecting against apoptosis. Interacts with INPP5K; necessary for INPP5K localization at the endoplasmic reticulum. Interacts with MANF; the interaction is direct. Interacts with LOXL2; leading to activate the ERN1/IRE1-XBP1 pathway of the unfolded protein response. Interacts with CLU under stressed condition; interaction increases CLU protein stability; facilitates its retrotranslocation and redistribution to the mitochondria; cooperatively suppress stress-induced apoptosis by stabilizing mitochondrial membrane integrity. Interacts with CCDC47. Interacts with CLN3. Interacts with ELAPOR1; may regulate the function of HSPA5 in apoptosis and cell proliferation. Interacts with CASP7. Interacts with ILDR2; the interaction stabilizes ILDR2 expression. Interacts with ADAM7. In unstressed cells, AMPylation at Thr-162 by FICD inactivates the chaperome activity: AMPylated form is locked in a relatively inert state and only weakly stimulated by J domain-containing proteins. In response to endoplasmic reticulum stress, de-AMPylation by the same protein, FICD, restores the chaperone activity.

Its subcellular location is the endoplasmic reticulum lumen. The protein resides in the melanosome. It localises to the cytoplasm. It is found in the cell surface. It catalyses the reaction ATP + H2O = ADP + phosphate + H(+). The chaperone activity is regulated by ATP-induced allosteric coupling of the nucleotide-binding (NBD) and substrate-binding (SBD) domains. In the ADP-bound and nucleotide-free (apo) states, the two domains have little interaction. In contrast, in the ATP-bound state the two domains are tightly coupled, which results in drastically accelerated kinetics in both binding and release of polypeptide substrates. J domain-containing co-chaperones (DNAJB9/ERdj4 or DNAJC10/ERdj5) stimulate the ATPase activity and are required for efficient substrate recognition by HSPA5/BiP. Homooligomerization inactivates participating HSPA5/BiP protomers and probably act as reservoirs to store HSPA5/BiP molecules when they are not needed by the cell. Its function is as follows. Endoplasmic reticulum chaperone that plays a key role in protein folding and quality control in the endoplasmic reticulum lumen. Involved in the correct folding of proteins and degradation of misfolded proteins via its interaction with DNAJC10/ERdj5, probably to facilitate the release of DNAJC10/ERdj5 from its substrate. Acts as a key repressor of the EIF2AK3/PERK and ERN1/IRE1-mediated unfolded protein response (UPR). In the unstressed endoplasmic reticulum, recruited by DNAJB9/ERdj4 to the luminal region of ERN1/IRE1, leading to disrupt the dimerization of ERN1/IRE1, thereby inactivating ERN1/IRE1. Also binds and inactivates EIF2AK3/PERK in unstressed cells. Accumulation of misfolded protein in the endoplasmic reticulum causes release of HSPA5/BiP from ERN1/IRE1 and EIF2AK3/PERK, allowing their homodimerization and subsequent activation. Plays an auxiliary role in post-translational transport of small presecretory proteins across endoplasmic reticulum (ER). May function as an allosteric modulator for SEC61 channel-forming translocon complex, likely cooperating with SEC62 to enable the productive insertion of these precursors into SEC61 channel. Appears to specifically regulate translocation of precursors having inhibitory residues in their mature region that weaken channel gating. May also play a role in apoptosis and cell proliferation. This Sus scrofa (Pig) protein is Endoplasmic reticulum chaperone BiP.